A 217-amino-acid polypeptide reads, in one-letter code: Ras-related protein RGP2 (217 aa).

GTP contacts are provided by residues 19-26, 67-71, and 125-128; these read GDSGVGKS, DTAGQ, and NKSD. Residues C214 and C215 are each lipidated (S-geranylgeranyl cysteine).

Belongs to the small GTPase superfamily. Rab family.

It localises to the cell membrane. The chain is Ras-related protein RGP2 (RGP2) from Oryza sativa subsp. japonica (Rice).